A 398-amino-acid polypeptide reads, in one-letter code: MSSFDEDIKRSIWEGKIPIVFTLSPDDLTSHLSPSPYTLMAPRNSYFPLITSLVKDYFSSSTLVLLDEMWLEYRGIPLKWHLPIGVLYDTIVGNNNCNNSNNNNNNNNNNNNNNNNNNNNNNNNNNNNNNNNNNNNNNNNNNNNNNNIIMEQPYWNIVVHFQSYPDRILLRCPNIESVRTYYKNVLKEANFIKQGDITKINNLNINQSNDLWDGLKSHDYDKFWSVNKKLIPNSNKEYKNIPIRLIINYKPPIQELIPVFDENLVELTLENLFSRIPYESFSNFLNYNNNNNNNNINNNSPPLSPNSNNNNNNNNVDNSIENSLNQTNVESAEPEFSNLLQYIKATNAEYKIQGIQPSLKSSAVWLYEHFGHPDNFLYIVLIDPSQNNNNNNNNSNNY.

The segment at 99-147 is disordered; the sequence is NSNNNNNNNNNNNNNNNNNNNNNNNNNNNNNNNNNNNNNNNNNNNNNNN. Lys-187 participates in a covalent cross-link: Glycyl lysine isopeptide (Lys-Gly) (interchain with G-Cter in ATG12). The disordered stretch occupies residues 292 to 321; sequence NNNNINNNSPPLSPNSNNNNNNNNVDNSIE.

This sequence belongs to the ATG5 family. In terms of processing, conjugated to atg12; which is essential for autophagy.

Its subcellular location is the cytoplasm. It localises to the preautophagosomal structure membrane. Functionally, involved in autophagic vesicle formation. Conjugation with atg12, through a ubiquitin-like conjugating system involving atg7 as an E1-like activating enzyme and atg10 as an E2-like conjugating enzyme, is essential for its function. The atg12-atg5 conjugate acts as an E3-like enzyme which is required for lipidation of atg8 and its association to the vesicle membranes. The polypeptide is Autophagy protein 5 (atg5) (Dictyostelium discoideum (Social amoeba)).